The sequence spans 797 residues: Xaa-Pro dipeptidyl-peptidase (797 aa).

Catalysis depends on charge relay system residues Ser-370, Asp-490, and His-521.

The protein belongs to the peptidase S15 family. As to quaternary structure, homodimer.

It is found in the cytoplasm. It catalyses the reaction Hydrolyzes Xaa-Pro-|- bonds to release unblocked, N-terminal dipeptides from substrates including Ala-Pro-|-p-nitroanilide and (sequentially) Tyr-Pro-|-Phe-Pro-|-Gly-Pro-|-Ile.. Its function is as follows. Removes N-terminal dipeptides sequentially from polypeptides having unsubstituted N-termini provided that the penultimate residue is proline. This is Xaa-Pro dipeptidyl-peptidase from Lacticaseibacillus casei (strain BL23) (Lactobacillus casei).